The following is a 436-amino-acid chain: Gamma-glutamyl phosphate reductase (436 aa).

It belongs to the gamma-glutamyl phosphate reductase family.

Its subcellular location is the cytoplasm. It carries out the reaction L-glutamate 5-semialdehyde + phosphate + NADP(+) = L-glutamyl 5-phosphate + NADPH + H(+). The protein operates within amino-acid biosynthesis; L-proline biosynthesis; L-glutamate 5-semialdehyde from L-glutamate: step 2/2. Catalyzes the NADPH-dependent reduction of L-glutamate 5-phosphate into L-glutamate 5-semialdehyde and phosphate. The product spontaneously undergoes cyclization to form 1-pyrroline-5-carboxylate. The sequence is that of Gamma-glutamyl phosphate reductase from Prochlorococcus marinus (strain AS9601).